The following is a 357-amino-acid chain: Red-sensitive opsin (357 aa).

Over 1-49 (MAEQWGKQVFAARRQNEDTTRGSAFTYTNSNHTRDPFEGPNYHIAPRWV) the chain is Extracellular. An N-linked (GlcNAc...) asparagine glycan is attached at Asn-31. Residues 50 to 74 (YNLATLWMFFVVVLSVFTNGLVLVA) traverse the membrane as a helical segment. Residues 75–86 (TAKFKKLRHPLN) are Cytoplasmic-facing. The chain crosses the membrane as a helical span at residues 87 to 112 (WILSNLAIADLGETVFASTISVCNQF). Over 113-126 (FGYFILGHPMCVFE) the chain is Extracellular. Residues Cys-123 and Cys-200 are joined by a disulfide bond. Residues 127-146 (GYVVSTCGIAALWSLTIISW) traverse the membrane as a helical segment. Over 147–165 (ERWVVVCKPFGNVKFDAKW) the chain is Cytoplasmic. A helical membrane pass occupies residues 166–189 (AIGGIVFSWVWSAVWCAPPVFGWS). Residues 190 to 215 (RYWPHGLKTSCGPDVFSGSDDPGVQS) are Extracellular-facing. The helical transmembrane segment at 216 to 243 (YMIVLMITCCIIPLAIIILCYLAVWLAI) threads the bilayer. Topologically, residues 244–265 (RAVAMQQKESESTQKAEREVSR) are cytoplasmic. The helical transmembrane segment at 266–289 (MVVVMIVAYCVCWGPYTFFACFAA) threads the bilayer. At 290–297 (ANPGYAFH) the chain is on the extracellular side. Residues 298 to 322 (PLAAAMPAYFAKSATIYNPVIYVFM) form a helical membrane-spanning segment. At Lys-309 the chain carries N6-(retinylidene)lysine. At 323–357 (NRQFRTCIMQLFGKQVDDGSEVSTSKTEVSSVAPA) the chain is on the cytoplasmic side.

This sequence belongs to the G-protein coupled receptor 1 family. Opsin subfamily. Phosphorylated on some or all of the serine and threonine residues present in the C-terminal region. The color pigments are found in the cone photoreceptor cells.

It localises to the membrane. Its function is as follows. Visual pigments are the light-absorbing molecules that mediate vision. They consist of an apoprotein, opsin, covalently linked to cis-retinal. This Oryzias latipes (Japanese rice fish) protein is Red-sensitive opsin.